A 633-amino-acid polypeptide reads, in one-letter code: Extracellular metalloproteinase mep (633 aa).

A signal peptide spans Met-1–Ala-18. Residues His-19–Asp-244 constitute a propeptide that is removed on maturation. An N-linked (GlcNAc...) asparagine glycan is attached at Asn-326. A Zn(2+)-binding site is contributed by His-428. Glu-429 is an active-site residue. Residue His-432 participates in Zn(2+) binding. N-linked (GlcNAc...) asparagine glycosylation is present at Asn-514.

The protein belongs to the peptidase M36 family. Zn(2+) serves as cofactor.

The protein resides in the secreted. Functionally, secreted metalloproteinase that allows assimilation of proteinaceous substrates. This Aspergillus terreus (strain NIH 2624 / FGSC A1156) protein is Extracellular metalloproteinase mep (mep).